A 369-amino-acid polypeptide reads, in one-letter code: Ubiquinone biosynthesis protein COQ4, mitochondrial (369 aa).

The N-terminal 35 residues, 1–35 (MLTSQKVSRVLLHSSFLKTPVSTQSRSFVFTTIAT), are a transit peptide targeting the mitochondrion. Zn(2+) is bound by residues histidine 212, aspartate 213, histidine 216, and glutamate 228. Positions 329-360 (AAAAATVTQRQRQQQRATATAANATSASSANV) are enriched in low complexity. The segment at 329–369 (AAAAATVTQRQRQQQRATATAANATSASSANVKPSNTAGAM) is disordered.

Belongs to the COQ4 family. In terms of assembly, component of a multi-subunit COQ enzyme complex, composed of at least COQ3, COQ4, COQ5, COQ6, COQ7 and COQ9. Zn(2+) is required as a cofactor.

It is found in the mitochondrion inner membrane. The enzyme catalyses a 4-hydroxy-3-methoxy-5-(all-trans-polyprenyl)benzoate + H(+) = a 2-methoxy-6-(all-trans-polyprenyl)phenol + CO2. It participates in cofactor biosynthesis; ubiquinone biosynthesis. In terms of biological role, lyase that catalyzes the C1-decarboxylation of 4-hydroxy-3-methoxy-5-(all-trans-polyprenyl)benzoic acid into 2-methoxy-6-(all-trans-polyprenyl)phenol during ubiquinone biosynthesis. The protein is Ubiquinone biosynthesis protein COQ4, mitochondrial of Lodderomyces elongisporus (strain ATCC 11503 / CBS 2605 / JCM 1781 / NBRC 1676 / NRRL YB-4239) (Yeast).